Reading from the N-terminus, the 709-residue chain is Polyribonucleotide nucleotidyltransferase (709 aa).

2 residues coordinate Mg(2+): D487 and D493. Positions 554–613 constitute a KH domain; that stretch reads PRIHTMKISSDKIKDVIGKGGAVIRALCEETGTTIEIEDDGTIKIAATEGAAAKEAIRRI. One can recognise an S1 motif domain in the interval 623 to 691; it reads GKIYTGKVMR…RQGRIRLSIK (69 aa).

This sequence belongs to the polyribonucleotide nucleotidyltransferase family. In terms of assembly, component of the RNA degradosome, which is a multiprotein complex involved in RNA processing and mRNA degradation. Mg(2+) serves as cofactor.

Its subcellular location is the cytoplasm. It carries out the reaction RNA(n+1) + phosphate = RNA(n) + a ribonucleoside 5'-diphosphate. Functionally, involved in mRNA degradation. Catalyzes the phosphorolysis of single-stranded polyribonucleotides processively in the 3'- to 5'-direction. The chain is Polyribonucleotide nucleotidyltransferase from Aliivibrio fischeri (strain ATCC 700601 / ES114) (Vibrio fischeri).